A 166-amino-acid polypeptide reads, in one-letter code: NAD(P)H-quinone oxidoreductase subunit I, chloroplastic (166 aa).

4Fe-4S ferredoxin-type domains lie at 55–84 (GRIH…VDWK) and 95–124 (LNYS…MTEE). Residues Cys-64, Cys-67, Cys-70, Cys-74, Cys-104, Cys-107, Cys-110, and Cys-114 each coordinate [4Fe-4S] cluster.

This sequence belongs to the complex I 23 kDa subunit family. NDH is composed of at least 16 different subunits, 5 of which are encoded in the nucleus. It depends on [4Fe-4S] cluster as a cofactor.

Its subcellular location is the plastid. The protein resides in the chloroplast thylakoid membrane. It catalyses the reaction a plastoquinone + NADH + (n+1) H(+)(in) = a plastoquinol + NAD(+) + n H(+)(out). It carries out the reaction a plastoquinone + NADPH + (n+1) H(+)(in) = a plastoquinol + NADP(+) + n H(+)(out). NDH shuttles electrons from NAD(P)H:plastoquinone, via FMN and iron-sulfur (Fe-S) centers, to quinones in the photosynthetic chain and possibly in a chloroplast respiratory chain. The immediate electron acceptor for the enzyme in this species is believed to be plastoquinone. Couples the redox reaction to proton translocation, and thus conserves the redox energy in a proton gradient. The chain is NAD(P)H-quinone oxidoreductase subunit I, chloroplastic from Encelia californica (Bush sunflower).